The sequence spans 256 residues: Glutamate racemase (256 aa).

Substrate-binding positions include 11–12 and 43–44; these read DS and YG. The active-site Proton donor/acceptor is C74. 75–76 serves as a coordination point for substrate; sequence NT. The active-site Proton donor/acceptor is C182. 183–184 contacts substrate; the sequence is TH.

The protein belongs to the aspartate/glutamate racemases family.

It catalyses the reaction L-glutamate = D-glutamate. It participates in cell wall biogenesis; peptidoglycan biosynthesis. Its function is as follows. Provides the (R)-glutamate required for cell wall biosynthesis. This is Glutamate racemase from Leptospira interrogans serogroup Icterohaemorrhagiae serovar copenhageni (strain Fiocruz L1-130).